A 218-amino-acid chain; its full sequence is Glutathione S-transferase Mu 2 (218 aa).

The GST N-terminal domain occupies 2-88 (PMTLGYWDIR…YLGRKHNLCG (87 aa)). 7-8 (YW) provides a ligand contact to glutathione. Phosphoserine is present on residues serine 27 and serine 44. Residues 43–46 (RSQW), lysine 50, 59–60 (NL), and 72–73 (QS) each bind glutathione. Residues 90–214 (TEEERIRVDV…SKPIFAKMAF (125 aa)) enclose the GST C-terminal domain. Residue tyrosine 116 coordinates substrate. Position 117 is a phosphoserine (serine 117).

The protein belongs to the GST superfamily. Mu family. Homodimer or heterodimer.

The protein localises to the cytoplasm. The enzyme catalyses RX + glutathione = an S-substituted glutathione + a halide anion + H(+). It catalyses the reaction 11(S)-hydroxy-14(S),15(S)-epoxy-(5Z,8Z,12E)-eicosatrienoate + glutathione = (11S,15S)-dihydroxy-14(R)-S-glutathionyl-(5Z,8Z,12E)-eicosatrienoate. In terms of biological role, conjugation of reduced glutathione to a wide number of exogenous and endogenous hydrophobic electrophiles. Participates in the formation of novel hepoxilin regioisomers. The chain is Glutathione S-transferase Mu 2 from Rattus norvegicus (Rat).